Consider the following 230-residue polypeptide: Ion-translocating oxidoreductase complex subunit E (230 aa).

The next 6 helical transmembrane spans lie at 18 to 38 (ALVQ…ITNA), 39 to 59 (LGLG…VSLI), 69 to 89 (IPVF…LMNA), 93 to 113 (GLYL…IIIG), 124 to 144 (VLPA…VLVV), and 182 to 202 (SFLL…LIAL).

This sequence belongs to the NqrDE/RnfAE family. In terms of assembly, the complex is composed of six subunits: RnfA, RnfB, RnfC, RnfD, RnfE and RnfG.

The protein localises to the cell inner membrane. Functionally, part of a membrane-bound complex that couples electron transfer with translocation of ions across the membrane. In Vibrio parahaemolyticus serotype O3:K6 (strain RIMD 2210633), this protein is Ion-translocating oxidoreductase complex subunit E.